A 169-amino-acid chain; its full sequence is MPLLDSFTVDHTRMNAPAVRVAKSMSTPKGDTITVFDLRFCVPNKQILSERGIHTLEHLFAGFMRDHLNGDNVEIIDISPMGCRTGFYMSLIGAPSESIVADAWLAAMQDVLAVVEQSEIPELNEYQCGTYEMHSLEQAKEIARSIISAGINVNRNDELTLSDEILNGL.

Positions 54, 58, and 128 each coordinate Fe cation.

Belongs to the LuxS family. In terms of assembly, homodimer. It depends on Fe cation as a cofactor.

The catalysed reaction is S-(5-deoxy-D-ribos-5-yl)-L-homocysteine = (S)-4,5-dihydroxypentane-2,3-dione + L-homocysteine. In terms of biological role, involved in the synthesis of autoinducer 2 (AI-2) which is secreted by bacteria and is used to communicate both the cell density and the metabolic potential of the environment. The regulation of gene expression in response to changes in cell density is called quorum sensing. Catalyzes the transformation of S-ribosylhomocysteine (RHC) to homocysteine (HC) and 4,5-dihydroxy-2,3-pentadione (DPD). This Shewanella piezotolerans (strain WP3 / JCM 13877) protein is S-ribosylhomocysteine lyase.